The following is a 256-amino-acid chain: Putative ankyrin repeat protein FPV231 (256 aa).

5 ANK repeats span residues 1–20, 24–53, 57–86, 90–119, and 123–151; these read MFGNTTISKMLLDYGARIDS, EECLPLNHAIATNNKELTSLFLARGADTNI, YNRSVLHKAIGNNNITSVKLLLNHGIDYNL, HGYTALHYAITLQNREITDMLLSSGADPNI, and EKHTPLYHALLYRSSNVESLILHGADINI.

This is Putative ankyrin repeat protein FPV231 from Vertebrata (FPV).